Consider the following 283-residue polypeptide: Ribosome biogenesis GTPase A (283 aa).

One can recognise a CP-type G domain in the interval 14–178 (RREVTEKLKL…LLDTPGILWP (165 aa)). GTP-binding positions include 58 to 61 (NKAD), 86 to 87 (NS), 130 to 135 (NVGKST), and G174.

It belongs to the TRAFAC class YlqF/YawG GTPase family. MTG1 subfamily. As to quaternary structure, interacts with ctc. Interacts with the immature 50S ribosome subunit. 2 molecules of rbgA bind to one 50S subunit.

The protein localises to the cytoplasm. Functionally, essential protein that is required for a late step of 50S ribosomal subunit assembly. Has GTPase activity that is stimulated by interaction with the immature 50S ribosome subunit. Binds to the 23S rRNA. Required for the association of ribosomal proteins rplP and rpmA with the large subunit. The polypeptide is Ribosome biogenesis GTPase A (Bacillus licheniformis (strain ATCC 14580 / DSM 13 / JCM 2505 / CCUG 7422 / NBRC 12200 / NCIMB 9375 / NCTC 10341 / NRRL NRS-1264 / Gibson 46)).